The chain runs to 809 residues: F-BAR domain only protein 2 (809 aa).

In terms of domain architecture, F-BAR spans 3–250; sequence MAHFVENFWG…NMANTTIESL (248 aa). The segment at 3 to 274 is mediates dimerization and binding to membranes enriched in Pi(4,5)-P2 and induces their tubulation; the sequence is MAHFVENFWG…PGLIEFEECD (272 aa). Residues 87–156 are a coiled coil; it reads HLDLVRKLQE…CVEQERLKKE (70 aa). A Glycyl lysine isopeptide (Lys-Gly) (interchain with G-Cter in SUMO2) cross-link involves residue K297. The interval 301–352 is disordered; the sequence is DAESVECPDADSLNIPDVDEEGFSIKPEANQNDTKENHFYSSSDSDSEDEEP. S312 carries the post-translational modification Phosphoserine. At T385 the chain carries Phosphothreonine. Phosphoserine is present on residues S387, S394, S402, and S403. The span at 390–416 shows a compositional bias: polar residues; sequence VSRHSPVQMNRNSSNEELTKSKPSSLP. Disordered stretches follow at residues 390–422 and 435–536; these read VSRH…KGTN and LESS…PVSL. The segment covering 435-456 has biased composition (low complexity); sequence LESSSAPLTSSSSARPTTPLSL. S487, S492, S495, S507, S509, S510, and S532 each carry phosphoserine. The span at 501–520 shows a compositional bias: low complexity; sequence PLARAESSSSISSSASLSAA. The segment at 520–809 is mediates interaction with DAB2, EPS15, EPS15R and ITSN1; that stretch reads ANTPTVGVSR…FATGRYLADC (290 aa). One can recognise an MHD domain in the interval 541–808; that stretch reads TLPVAIALTE…RFATGRYLAD (268 aa).

This sequence belongs to the FCHO family. As to quaternary structure, homodimer; disulfide-linked. May form homotetramer. Interacts with AP2A1. Interacts with EPS15, EPS15R, ITSN1 and ITSN2; recruit those scaffolding proteins which in turn may interact with the adaptor protein complex AP-2 at the plasma membrane. Interacts with DAB2 (via DPF motifs); mediates LDL receptor/LDLR endocytosis. Ubiquitinated. Mainly undergoes monoubiquitination but also polyubiquitination. In terms of tissue distribution, ubiquitously expressed (at protein level).

Its subcellular location is the membrane. It localises to the clathrin-coated pit. Its function is as follows. Functions in an early step of clathrin-mediated endocytosis. Has both a membrane binding/bending activity and the ability to recruit proteins essential to the formation of functional clathrin-coated pits. Has a lipid-binding activity with a preference for membranes enriched in phosphatidylserine and phosphoinositides (Pi(4,5) biphosphate) like the plasma membrane. Its membrane-bending activity might be important for the subsequent action of clathrin and adaptors in the formation of clathrin-coated vesicles. Involved in adaptor protein complex AP-2-dependent endocytosis of the transferrin receptor, it also functions in the AP-2-independent endocytosis of the LDL receptor. The protein is F-BAR domain only protein 2 (Fcho2) of Mus musculus (Mouse).